The following is a 57-amino-acid chain: Potassium channel toxin alpha-KTx 26.1 (57 aa).

The first 22 residues, 1–22 (MSRLFVFILIALFLSAIIDVMS), serve as a signal peptide directing secretion. 3 disulfide bridges follow: Cys-30-Cys-48, Cys-34-Cys-53, and Cys-38-Cys-55.

It belongs to the short scorpion toxin superfamily. Potassium channel inhibitor family. Alpha-KTx 26 subfamily. As to expression, expressed by the venom gland.

Its subcellular location is the secreted. Functionally, recombinant toxin that reversibly inhibits the potassium current of mKv1.3/KCNA3 channel stably expressed in COS7 cells (IC(50)=150 nM). Also shows a weak inhibition on Kv1.2/KCNA2, Kv1.3/KCNA3 and TRPV1 channels. This is Potassium channel toxin alpha-KTx 26.1 from Olivierus martensii (Manchurian scorpion).